The sequence spans 318 residues: Ubiquitin-like domain-containing CTD phosphatase 1 (318 aa).

Ala2 carries the N-acetylalanine modification. Residues 3-81 enclose the Ubiquitin-like domain; the sequence is LPIIVKWGGQ…IMMMGTREES (79 aa). Lys117 bears the N6-acetyllysine mark. In terms of domain architecture, FCP1 homology spans 133–294; it reads PREGKKLLVL…LKLTQYLKEI (162 aa). The Mg(2+) site is built by Asp143, Asp145, and Asp253.

Mg(2+) serves as cofactor.

It localises to the nucleus. The catalysed reaction is O-phospho-L-seryl-[protein] + H2O = L-seryl-[protein] + phosphate. The enzyme catalyses O-phospho-L-threonyl-[protein] + H2O = L-threonyl-[protein] + phosphate. Dephosphorylates 26S nuclear proteasomes, thereby decreasing their proteolytic activity. Recruited to the 19S regulatory particle of the 26S proteasome through its interaction with 19S component PSMD2/RPN1. Once recruited, dephosphorylates 19S component PSMC2/RPT1 which impairs PSMC2 ATPase activity and disrupts 26S proteasome assembly. Has also been reported to stimulate the proteolytic activity of the 26S proteasome. The polypeptide is Ubiquitin-like domain-containing CTD phosphatase 1 (UBLCP1) (Pongo abelii (Sumatran orangutan)).